The following is a 587-amino-acid chain: Proteasome-associated ATPase (587 aa).

Residues 1–94 (MAARDDAEAR…KEEVDRLAQP (94 aa)) are a coiled coil. Residue 276–281 (GCGKTL) participates in ATP binding. Residues 586-587 (YL) form a docks into pockets in the proteasome alpha-ring region.

This sequence belongs to the AAA ATPase family. In terms of assembly, homohexamer. Assembles into a hexameric ring structure that caps the 20S proteasome core. Strongly interacts with the prokaryotic ubiquitin-like protein Pup through a hydrophobic interface; the interacting region of ARC lies in its N-terminal coiled-coil domain. There is one Pup binding site per ARC hexamer ring. Upon ATP-binding, the C-terminus of ARC interacts with the alpha-rings of the proteasome core, possibly by binding to the intersubunit pockets.

The protein operates within protein degradation; proteasomal Pup-dependent pathway. ATPase which is responsible for recognizing, binding, unfolding and translocation of pupylated proteins into the bacterial 20S proteasome core particle. May be essential for opening the gate of the 20S proteasome via an interaction with its C-terminus, thereby allowing substrate entry and access to the site of proteolysis. Thus, the C-termini of the proteasomal ATPase may function like a 'key in a lock' to induce gate opening and therefore regulate proteolysis. The polypeptide is Proteasome-associated ATPase (Streptosporangium roseum (strain ATCC 12428 / DSM 43021 / JCM 3005 / KCTC 9067 / NCIMB 10171 / NRRL 2505 / NI 9100)).